The chain runs to 157 residues: Peptide methionine sulfoxide reductase MsrA (157 aa).

Residue cysteine 13 is part of the active site.

This sequence belongs to the MsrA Met sulfoxide reductase family.

The enzyme catalyses L-methionyl-[protein] + [thioredoxin]-disulfide + H2O = L-methionyl-(S)-S-oxide-[protein] + [thioredoxin]-dithiol. It carries out the reaction [thioredoxin]-disulfide + L-methionine + H2O = L-methionine (S)-S-oxide + [thioredoxin]-dithiol. In terms of biological role, has an important function as a repair enzyme for proteins that have been inactivated by oxidation. Catalyzes the reversible oxidation-reduction of methionine sulfoxide in proteins to methionine. This chain is Peptide methionine sulfoxide reductase MsrA, found in Methanococcus maripaludis (strain C6 / ATCC BAA-1332).